The primary structure comprises 194 residues: FMN-dependent NADH:quinone oxidoreductase 1 (194 aa).

Residues serine 9 and 85 to 88 (MYNF) each bind FMN.

This sequence belongs to the azoreductase type 1 family. As to quaternary structure, homodimer. FMN serves as cofactor.

The catalysed reaction is 2 a quinone + NADH + H(+) = 2 a 1,4-benzosemiquinone + NAD(+). It carries out the reaction N,N-dimethyl-1,4-phenylenediamine + anthranilate + 2 NAD(+) = 2-(4-dimethylaminophenyl)diazenylbenzoate + 2 NADH + 2 H(+). Quinone reductase that provides resistance to thiol-specific stress caused by electrophilic quinones. Its function is as follows. Also exhibits azoreductase activity. Catalyzes the reductive cleavage of the azo bond in aromatic azo compounds to the corresponding amines. In Xanthomonas euvesicatoria pv. vesicatoria (strain 85-10) (Xanthomonas campestris pv. vesicatoria), this protein is FMN-dependent NADH:quinone oxidoreductase 1.